We begin with the raw amino-acid sequence, 640 residues long: Threonine--tRNA ligase (640 aa).

The TGS domain maps to 1–61; the sequence is MPTITLPDGS…THDATLQIIT (61 aa). A catalytic region spans residues 242–533; the sequence is DHRKIGKQLD…LIEHYAGVFP (292 aa). Zn(2+) is bound by residues cysteine 333, histidine 384, and histidine 510.

Belongs to the class-II aminoacyl-tRNA synthetase family. As to quaternary structure, homodimer. The cofactor is Zn(2+).

Its subcellular location is the cytoplasm. The catalysed reaction is tRNA(Thr) + L-threonine + ATP = L-threonyl-tRNA(Thr) + AMP + diphosphate + H(+). Functionally, catalyzes the attachment of threonine to tRNA(Thr) in a two-step reaction: L-threonine is first activated by ATP to form Thr-AMP and then transferred to the acceptor end of tRNA(Thr). Also edits incorrectly charged L-seryl-tRNA(Thr). This Pseudomonas putida (strain W619) protein is Threonine--tRNA ligase.